The chain runs to 440 residues: Trigger factor (440 aa).

A PPIase FKBP-type domain is found at 163–248; the sequence is GMVLTVDFSF…LKEIKKKELP (86 aa).

The protein belongs to the FKBP-type PPIase family. Tig subfamily.

The protein localises to the cytoplasm. The enzyme catalyses [protein]-peptidylproline (omega=180) = [protein]-peptidylproline (omega=0). Involved in protein export. Acts as a chaperone by maintaining the newly synthesized protein in an open conformation. Functions as a peptidyl-prolyl cis-trans isomerase. This chain is Trigger factor, found in Trichlorobacter lovleyi (strain ATCC BAA-1151 / DSM 17278 / SZ) (Geobacter lovleyi).